A 58-amino-acid chain; its full sequence is Photosystem II reaction center protein K (58 aa).

A propeptide spanning residues 1–21 is cleaved from the precursor; the sequence is MFDLYLKNLLDLSDSGTVVLA. A helical membrane pass occupies residues 29 to 49; it reads IFDPIVDVLPVIPVFFLLLAF.

Belongs to the PsbK family. As to quaternary structure, PSII is composed of 1 copy each of membrane proteins PsbA, PsbB, PsbC, PsbD, PsbE, PsbF, PsbH, PsbI, PsbJ, PsbK, PsbL, PsbM, PsbT, PsbX, PsbY, PsbZ, Psb30/Ycf12, at least 3 peripheral proteins of the oxygen-evolving complex and a large number of cofactors. It forms dimeric complexes.

The protein resides in the plastid. The protein localises to the chloroplast thylakoid membrane. One of the components of the core complex of photosystem II (PSII). PSII is a light-driven water:plastoquinone oxidoreductase that uses light energy to abstract electrons from H(2)O, generating O(2) and a proton gradient subsequently used for ATP formation. It consists of a core antenna complex that captures photons, and an electron transfer chain that converts photonic excitation into a charge separation. In Zygnema circumcarinatum (Green alga), this protein is Photosystem II reaction center protein K.